Here is a 218-residue protein sequence, read N- to C-terminus: Cytidylate kinase (218 aa).

11-19 (GPGASGKGT) lines the ATP pocket.

The protein belongs to the cytidylate kinase family. Type 1 subfamily.

It localises to the cytoplasm. The catalysed reaction is CMP + ATP = CDP + ADP. It carries out the reaction dCMP + ATP = dCDP + ADP. This is Cytidylate kinase from Neisseria gonorrhoeae (strain ATCC 700825 / FA 1090).